The sequence spans 494 residues: Alpha-amylase-related protein (494 aa).

The signal sequence occupies residues M1 to A20. The residue at position 21 (Q21) is a Pyrrolidone carboxylic acid. An intrachain disulfide couples C48 to C104. Residues N118, Q169, and D178 each contribute to the Ca(2+) site. Cysteines 157 and 171 form a disulfide. R206 contributes to the chloride binding site. D208 functions as the Nucleophile in the catalytic mechanism. H212 contacts Ca(2+). E245 (proton donor) is an active-site residue. Chloride contacts are provided by N308 and R343. 3 disulfides stabilise this stretch: C376/C382, C418/C441, and C448/C460.

The protein belongs to the glycosyl hydrolase 13 family. Monomer. Ca(2+) is required as a cofactor. It depends on chloride as a cofactor.

Its subcellular location is the secreted. The catalysed reaction is Endohydrolysis of (1-&gt;4)-alpha-D-glucosidic linkages in polysaccharides containing three or more (1-&gt;4)-alpha-linked D-glucose units.. The protein is Alpha-amylase-related protein (Amyrel) of Drosophila auraria (Fruit fly).